The primary structure comprises 76 residues: ATP synthase subunit c (76 aa).

Helical transmembrane passes span 13-33 and 55-75; these read LSVI…GILF and FIGL…ALII.

It belongs to the ATPase C chain family. As to quaternary structure, F-type ATPases have 2 components, F(1) - the catalytic core - and F(0) - the membrane proton channel. F(1) has five subunits: alpha(3), beta(3), gamma(1), delta(1), epsilon(1). F(0) has three main subunits: a(1), b(2) and c(10-14). The alpha and beta chains form an alternating ring which encloses part of the gamma chain. F(1) is attached to F(0) by a central stalk formed by the gamma and epsilon chains, while a peripheral stalk is formed by the delta and b chains.

The protein localises to the cell membrane. Functionally, f(1)F(0) ATP synthase produces ATP from ADP in the presence of a proton or sodium gradient. F-type ATPases consist of two structural domains, F(1) containing the extramembraneous catalytic core and F(0) containing the membrane proton channel, linked together by a central stalk and a peripheral stalk. During catalysis, ATP synthesis in the catalytic domain of F(1) is coupled via a rotary mechanism of the central stalk subunits to proton translocation. Key component of the F(0) channel; it plays a direct role in translocation across the membrane. A homomeric c-ring of between 10-14 subunits forms the central stalk rotor element with the F(1) delta and epsilon subunits. The polypeptide is ATP synthase subunit c (Bifidobacterium longum subsp. infantis (strain ATCC 15697 / DSM 20088 / JCM 1222 / NCTC 11817 / S12)).